We begin with the raw amino-acid sequence, 377 residues long: MRLKRNMSDNSQKKVIVGMSGGVDSSVSAYLLLQQGYQVEGLFMKNWEEDDNEEYCSAAEDLADAQAVCDKLGIHLHTINFAAEYWDNVFEYFLAEYKAGRTPNPDILCNKEIKFKAFLEFADEVLEADYIAMGHYTRRSFPTAEGEKPKMLRGVDSNKDQSYFLYTLSHEQIARSLFPVGELEKPEVRRIAEEQDLITAKKKDSTGICFIGERKFTEFLGKYLPAQPGKIETADEGKVIGEHQGLMYHTLGQRKGLHIGGQKGGNGLEDAWYVVDKDLKRNVLIVGQGKDHPRLKSNGLVASQLDWVDRQPIRETMTCTVKTRYRQEDIPCTIIPIDDENIKVIFDEPQIAVTPGQSAVFYSNEICLGGGIIEQRI.

Residues 18–25 (GMSGGVDS) and Met-44 contribute to the ATP site. The interaction with target base in tRNA stretch occupies residues 104–106 (NPD). The active-site Nucleophile is Cys-109. Cysteines 109 and 209 form a disulfide. An ATP-binding site is contributed by Gly-134. Positions 159–161 (KDQ) are interaction with tRNA. Cys-209 (cysteine persulfide intermediate) is an active-site residue. An interaction with tRNA region spans residues 324–325 (RY).

It belongs to the MnmA/TRMU family.

The protein localises to the cytoplasm. The enzyme catalyses S-sulfanyl-L-cysteinyl-[protein] + uridine(34) in tRNA + AH2 + ATP = 2-thiouridine(34) in tRNA + L-cysteinyl-[protein] + A + AMP + diphosphate + H(+). Catalyzes the 2-thiolation of uridine at the wobble position (U34) of tRNA, leading to the formation of s(2)U34. This chain is tRNA-specific 2-thiouridylase MnmA, found in Photobacterium profundum (strain SS9).